Reading from the N-terminus, the 288-residue chain is Structure-specific endonuclease subunit SLX1 (288 aa).

One can recognise a GIY-YIG domain in the interval 10–93 (DFYCSYLLRS…QHSYKTRFIE (84 aa)). The SLX1-type zinc-finger motif lies at 209 to 265 (CMICDKKIDYIHDEGTQMVGFCSDDECDFLSCLSCLYKEFTKNSKQIIPKSGHCPNC).

This sequence belongs to the SLX1 family. Forms a heterodimer with SLX4. Requires a divalent metal cation as cofactor.

The protein localises to the nucleus. Functionally, catalytic subunit of the SLX1-SLX4 structure-specific endonuclease that resolves DNA secondary structures generated during DNA repair and recombination. Has endonuclease activity towards branched DNA substrates, introducing single-strand cuts in duplex DNA close to junctions with ss-DNA. The protein is Structure-specific endonuclease subunit SLX1 of Kluyveromyces lactis (strain ATCC 8585 / CBS 2359 / DSM 70799 / NBRC 1267 / NRRL Y-1140 / WM37) (Yeast).